Consider the following 187-residue polypeptide: Virulence protein ATR13 (187 aa).

The first 19 residues, 1–19, serve as a signal peptide directing secretion; that stretch reads MRLVHAVLLPGIIVFVSNG. Residues 38 to 41 carry the RxLR motif; it reads RQLR. The leucine heptad repeat region stretch occupies residues 50 to 92; it reads LSRASFGLGKAQDPLDKFFRKIINSRKPIETSYSAKGIHEKII. 4 consecutive repeat copies span residues 93–103, 104–114, 115–125, and 126–136. The tract at residues 93-136 is 4 X 11 AA tandem repeats; sequence KAYDRHVFESKKAHDRHVSKSKKAHGRHVSKSKMAHDRHVSKSE. Positions 104–136 are disordered; that stretch reads KAHDRHVSKSKKAHGRHVSKSKMAHDRHVSKSE. Basic residues predominate over residues 111–125; that stretch reads SKSKKAHGRHVSKSK. The span at 126-136 shows a compositional bias: basic and acidic residues; that stretch reads MAHDRHVSKSE. Residues 137–187 form a highly variable C-terminus domain region; sequence KAPIQYASVADYLKKIYPGTDIERIVSTLKRHDEVGAKDLGAKLQTAVASQ.

This sequence belongs to the RxLR effector family.

The protein resides in the secreted. It is found in the host nucleus. The protein localises to the host nucleolus. It localises to the host cytoplasm. In terms of biological role, secreted effector that acts as an elicitor of hypersensitive response (HR) specifically on plants carrying defense protein RPP13. Recognition of ATR13 by RPP13 initiates defense responses that are effective against oomycete, bacterial and viral pathogens. Due to high polymorphism, ATR13-Emoy2 does not recognize RPP13-Nd, the RPP13 defense protein from Arabidopsis thaliana ecotype Niederzenz. ATR13-Emoy2 is recognized by RPP13 variants RPP13-UKID44, RPP13-UKID65 and RPP13-UKID71. The protein is Virulence protein ATR13 of Hyaloperonospora arabidopsidis (strain Emoy2) (Downy mildew agent).